The following is a 367-amino-acid chain: Septin-1 (367 aa).

The Septin-type G domain maps to 22–296; the sequence is KGFDFTLMVA…EGYRARCLQS (275 aa). Positions 32-39 are G1 motif; the sequence is GESGLGKS. GTP is bound by residues 32 to 39, Thr66, Gly92, and 171 to 179; these read GESGLGKS and KADALMPKE. The segment at 89–92 is G3 motif; the sequence is DTPG. A G4 motif region spans residues 170–173; that stretch reads GKAD. The residue at position 206 (Ser206) is a Phosphoserine. GTP-binding residues include Gly229 and Arg245. Ser248 is modified (phosphoserine; by AURKB). Position 251 is a phosphothreonine (Thr251). Ser307 and Ser315 each carry phosphoserine; by AURKB.

It belongs to the TRAFAC class TrmE-Era-EngA-EngB-Septin-like GTPase superfamily. Septin GTPase family. As to quaternary structure, septins polymerize into heterooligomeric protein complexes that form filaments, and can associate with cellular membranes, actin filaments and microtubules. GTPase activity is required for filament formation. Interacts with AURKB.

The protein resides in the cytoplasm. It localises to the cytoskeleton. Its subcellular location is the microtubule organizing center. It is found in the centrosome. The protein localises to the midbody. Filament-forming cytoskeletal GTPase. May play a role in cytokinesis (Potential). The sequence is that of Septin-1 from Bos taurus (Bovine).